Reading from the N-terminus, the 431-residue chain is FAD-dependent monooxygenase nodY1 (431 aa).

A signal peptide spans 1-21 (MASTGVSVIVVGLGLAGLTTA). FAD is bound by residues Glu-35 and Arg-110. The active site involves Arg-188. Position 313 (Asp-313) interacts with FAD.

This sequence belongs to the paxM FAD-dependent monooxygenase family. Requires FAD as cofactor.

It participates in secondary metabolite biosynthesis. In terms of biological role, FAD-dependent monooxygenase; part of the gene cluster that mediates the biosynthesis of the indole diterpenes nodulisporic acids (NA). Nodulisporic acid A (NAA) and its chemically modified derivatives are of particular significance because of their highly potent insecticidal activity against blood-feeding arthropods and lack of observable adverse effects on mammals, in particular the tremogenicity associated with the paspaline-derived IDTs is not observed. The geranylgeranyl diphosphate (GGPP) synthase ggs1, localized outside of the cluster, is proposed to catalyze the first step in nodulisporic acid biosynthesis via conversion of farnesyl pyrophosphate and isopentyl pyrophosphate into geranylgeranyl pyrophosphate (GGPP). Condensation of indole-3-glycerol phosphate with GGPP by the prenyl transferase nodC then forms 3-geranylgeranylindole (3-GGI). Epoxidation by the FAD-dependent monooxygenase nodM leads to a single-epoxidized-GGI that is substrate of the terpene cyclase nodB for cyclization to yield emindole SB. The terminal methyl carbon, C28, of emindole SB is then oxidized by the cytochrome P450 monooxygenase nodW to produce nodulisporic acid F (NAF), the pentacyclic core of NAA. NAF is converted to nodulisporic acid E (NAE) via prenylation. This step is probably performed by one of the indole diterpene prenyltransferases nodD1 or nodD2. Several oxidation steps performed by the FAD-linked oxidoreductase nodO and one of the cytochrome P450 monooxygenase nodR, nodX or nodZ further convert NAE to nodulisporic acid D (NAD). NAD is substrate of cytochrome P450 monooxygenase nodJ to produce the precursor of nodulisporic acid C (NAC), converted to NAC by one of the indole diterpene prenyltransferases nodD1 or nodD2. The FAD-dependent monooxygenase nodY2 then oxidizes NAC to nodulisporic acid B (NAB). Finally NAB is converted to NAA by one of the cytochrome P450 monooxygenases nodR, nodX or nodZ. In Hypoxylon pulicicidum, this protein is FAD-dependent monooxygenase nodY1.